The chain runs to 173 residues: Nucleoside-triphosphatase THEP1 (173 aa).

ATP-binding positions include 9–16 and 97–104; these read GPPGVGKT and LYVIDEVG.

The protein belongs to the THEP1 NTPase family.

The enzyme catalyses a ribonucleoside 5'-triphosphate + H2O = a ribonucleoside 5'-diphosphate + phosphate + H(+). In terms of biological role, has nucleotide phosphatase activity towards ATP, GTP, CTP, TTP and UTP. May hydrolyze nucleoside diphosphates with lower efficiency. The protein is Nucleoside-triphosphatase THEP1 of Caldivirga maquilingensis (strain ATCC 700844 / DSM 13496 / JCM 10307 / IC-167).